A 725-amino-acid polypeptide reads, in one-letter code: N-alpha-acetyltransferase 35, NatC auxiliary subunit (725 aa).

The disordered stretch occupies residues Glu548–Ser573. A compositionally biased stretch (basic residues) spans Arg558–Pro571.

The protein belongs to the MAK10 family. Component of the N-terminal acetyltransferase C (NatC) complex.

Its subcellular location is the cytoplasm. In terms of biological role, auxillary component of the N-terminal acetyltransferase C (NatC) complex which catalyzes acetylation of N-terminal methionine residues. N-terminal acetylation protects proteins from ubiquitination and degradation by the N-end rule pathway. The sequence is that of N-alpha-acetyltransferase 35, NatC auxiliary subunit (NAA35) from Gallus gallus (Chicken).